We begin with the raw amino-acid sequence, 868 residues long: Leucine--tRNA ligase (868 aa).

Positions P42–H52 match the 'HIGH' region motif. Residues K627–S631 carry the 'KMSKS' region motif. Position 630 (K630) interacts with ATP.

The protein belongs to the class-I aminoacyl-tRNA synthetase family.

It is found in the cytoplasm. The catalysed reaction is tRNA(Leu) + L-leucine + ATP = L-leucyl-tRNA(Leu) + AMP + diphosphate. This Pseudomonas fluorescens (strain Pf0-1) protein is Leucine--tRNA ligase.